Reading from the N-terminus, the 349-residue chain is UDP-galactose/UDP-glucose transporter 4 (349 aa).

8 consecutive transmembrane segments (helical) span residues Trp-23 to Cys-43, Gly-56 to Phe-76, Ile-115 to Leu-135, Pro-140 to Ala-160, Asn-167 to Gly-187, Met-205 to Gly-225, Ala-248 to Ala-268, and Leu-293 to Val-313. A disordered region spans residues Pro-316–Val-349. The segment covering Glu-340–Val-349 has biased composition (acidic residues).

Belongs to the nucleotide-sugar transporter family. UDP-galactose:UMP antiporter (TC 2.A.7.11) subfamily.

It localises to the membrane. In terms of biological role, sugar transporter involved in the transport of nucleotide-sugars from cytoplasm into the Golgi and/or the endoplasmic reticulum. The sequence is that of UDP-galactose/UDP-glucose transporter 4 from Arabidopsis thaliana (Mouse-ear cress).